A 149-amino-acid polypeptide reads, in one-letter code: MGLEKSLILFPLFVLLLGWVQPSLGKESSAQKFERQHMDSSGSSNNSPTYCNQMMKSRSMTKESCKPVNTFVHEPLEDVQAICSQENVTCKNGNRNCYKSSSALHITDCHLKGNSKYPNCNYNTNQYQKHIIVACDGNPYVPVHLDATV.

Positions 1–25 are cleaved as a signal peptide; the sequence is MGLEKSLILFPLFVLLLGWVQPSLG. Positions 30–49 are disordered; sequence AQKFERQHMDSSGSSNNSPT. The substrate site is built by K32 and R35. H37 serves as the catalytic Proton acceptor. Polar residues predominate over residues 39-49; it reads DSSGSSNNSPT. 4 disulfide bridges follow: C51/C109, C65/C120, C83/C135, and C90/C97. Substrate is bound at residue 66 to 70; the sequence is KPVNT. N-linked (GlcNAc...) asparagine glycosylation is present at N87. K91 lines the substrate pocket. Residue H144 is the Proton donor of the active site.

Belongs to the pancreatic ribonuclease family. As to quaternary structure, monomer. Interacts with and forms tight 1:1 complexes with RNH1. Dimerization of two such complexes may occur. Interaction with RNH1 inhibits this protein. Pancreas.

The protein resides in the secreted. It carries out the reaction an [RNA] containing cytidine + H2O = an [RNA]-3'-cytidine-3'-phosphate + a 5'-hydroxy-ribonucleotide-3'-[RNA].. The catalysed reaction is an [RNA] containing uridine + H2O = an [RNA]-3'-uridine-3'-phosphate + a 5'-hydroxy-ribonucleotide-3'-[RNA].. Its function is as follows. Endonuclease that catalyzes the cleavage of RNA on the 3' side of pyrimidine nucleotides. Acts on single-stranded and double-stranded RNA. The polypeptide is Ribonuclease pancreatic (Rnase1) (Mus pahari (Gairdner's shrew-mouse)).